A 78-amino-acid polypeptide reads, in one-letter code: Large ribosomal subunit protein bL28 (78 aa).

Belongs to the bacterial ribosomal protein bL28 family.

This is Large ribosomal subunit protein bL28 from Trichodesmium erythraeum (strain IMS101).